The sequence spans 251 residues: MSVLRRIPQDGTFHQEGPIHRLAKRRPRFIASFDLSAATDRWPVPVIYELMACLFGQTMASCIVNGALALNSCSLKSVTGRHDEVVFVAGQPLGYYGSWALFALSHHAIVWLAALRAYPHQTRPFLDYALLGDDIVIADRSVAKEYRSLLDALQVDISDAKSIVSETGCLEFAKRFWVKIMSKDLSPVSAKAVLESYFLVGTQQLAYKYKLSPKTCLRLNKAGYRVLGQMDTTLRPYPGVLVGFRRYLVSF.

It is found in the mitochondrion. This is an uncharacterized protein from Arabidopsis thaliana (Mouse-ear cress).